The chain runs to 427 residues: Serine--tRNA ligase (427 aa).

L-serine is bound at residue 230-232; the sequence is TAE. ATP is bound at residue 261–263; the sequence is RAE. Residue Glu-284 coordinates L-serine. ATP is bound at residue 348-351; the sequence is EISS. Ser-384 contributes to the L-serine binding site.

This sequence belongs to the class-II aminoacyl-tRNA synthetase family. Type-1 seryl-tRNA synthetase subfamily. In terms of assembly, homodimer. The tRNA molecule binds across the dimer.

It is found in the cytoplasm. It catalyses the reaction tRNA(Ser) + L-serine + ATP = L-seryl-tRNA(Ser) + AMP + diphosphate + H(+). The enzyme catalyses tRNA(Sec) + L-serine + ATP = L-seryl-tRNA(Sec) + AMP + diphosphate + H(+). The protein operates within aminoacyl-tRNA biosynthesis; selenocysteinyl-tRNA(Sec) biosynthesis; L-seryl-tRNA(Sec) from L-serine and tRNA(Sec): step 1/1. Catalyzes the attachment of serine to tRNA(Ser). Is also able to aminoacylate tRNA(Sec) with serine, to form the misacylated tRNA L-seryl-tRNA(Sec), which will be further converted into selenocysteinyl-tRNA(Sec). This Syntrophomonas wolfei subsp. wolfei (strain DSM 2245B / Goettingen) protein is Serine--tRNA ligase.